Consider the following 141-residue polypeptide: Ribosome-binding factor A (141 aa).

The disordered stretch occupies residues 120-141; that stretch reads DEALRAQSAGARPAGDEDPYKP.

The protein belongs to the RbfA family. As to quaternary structure, monomer. Binds 30S ribosomal subunits, but not 50S ribosomal subunits or 70S ribosomes.

It localises to the cytoplasm. Its function is as follows. One of several proteins that assist in the late maturation steps of the functional core of the 30S ribosomal subunit. Associates with free 30S ribosomal subunits (but not with 30S subunits that are part of 70S ribosomes or polysomes). Required for efficient processing of 16S rRNA. May interact with the 5'-terminal helix region of 16S rRNA. This Corynebacterium jeikeium (strain K411) protein is Ribosome-binding factor A.